The chain runs to 73 residues: Large ribosomal subunit protein bL31 (73 aa).

It belongs to the bacterial ribosomal protein bL31 family. Type A subfamily. As to quaternary structure, part of the 50S ribosomal subunit.

Binds the 23S rRNA. The polypeptide is Large ribosomal subunit protein bL31 (Synechococcus sp. (strain JA-3-3Ab) (Cyanobacteria bacterium Yellowstone A-Prime)).